We begin with the raw amino-acid sequence, 229 residues long: Uracil-DNA glycosylase (229 aa).

Asp-70 acts as the Proton acceptor in catalysis.

This sequence belongs to the uracil-DNA glycosylase (UDG) superfamily. UNG family.

It is found in the cytoplasm. It carries out the reaction Hydrolyzes single-stranded DNA or mismatched double-stranded DNA and polynucleotides, releasing free uracil.. Excises uracil residues from the DNA which can arise as a result of misincorporation of dUMP residues by DNA polymerase or due to deamination of cytosine. This Chlamydia felis (strain Fe/C-56) (Chlamydophila felis) protein is Uracil-DNA glycosylase.